A 651-amino-acid polypeptide reads, in one-letter code: Intraflagellar transport protein 70A (651 aa).

TPR repeat units follow at residues 8–41 (DGEYTATVYKMIKEGRYGDAIHILSKEHQKHTKS), 42–75 (RAALSLLGYCYYHMQDFTNAAECYEQLTQLHPEV), 140–173 (PDYDVDLGCLLYKEGEFEEACKKFMSSMNVLGYQ), 175–207 (DLAYNIALCYYSLKQYASALKYIAEIIERGIRE), 379–410 (VTKQVQEARHNRDDESLKKYVQDYDEVLEKYI), 411–443 (PVLMAQAKIYWNRENYSMVEKIFHKSLEFCNEH), and 445–478 (TWKLNVAHVLFMQDNKYKEAIGFYEPIVKKHYEN). Positions 494–521 (YIMTSQNEEAEELMRKIEKEEEQISYDD) form a coiled coil. Residues 530 to 563 (CIVNLVIGTLYCAKGNYDFGISRVIKSLEPYNKK) form a TPR 8 repeat.

The protein belongs to the TTC30/dfy-1/fleer family. As to expression, localizes to the cilia of many ciliated epithelial cell types including pronephric cells, olfactory placode, the brain ventricle and lateral line organs.

The protein localises to the cell projection. Its subcellular location is the cilium. In terms of biological role, plays a role in anterograde intraflagellar transport (IFT), the process by which cilia precursors are transported from the base of the cilium to the site of their incorporation at the tip. Required for polyglutamylation of axonemal tubulin, which is a prerequisite for correct assembly of cilia and for normal cilia beat amplitude. Does not seem to be required for neuronal microtubule polyglutamylation. The protein is Intraflagellar transport protein 70A (ift70a) of Danio rerio (Zebrafish).